We begin with the raw amino-acid sequence, 436 residues long: 3-ketoacyl-CoA thiolase (436 aa).

The Acyl-thioester intermediate role is filled by Cys99. Active-site proton acceptor residues include His392 and Cys422.

The protein belongs to the thiolase-like superfamily. Thiolase family. Heterotetramer of two alpha chains (FadJ) and two beta chains (FadI).

The protein localises to the cytoplasm. It carries out the reaction an acyl-CoA + acetyl-CoA = a 3-oxoacyl-CoA + CoA. It functions in the pathway lipid metabolism; fatty acid beta-oxidation. Functionally, catalyzes the final step of fatty acid oxidation in which acetyl-CoA is released and the CoA ester of a fatty acid two carbons shorter is formed. This Shewanella halifaxensis (strain HAW-EB4) protein is 3-ketoacyl-CoA thiolase.